A 172-amino-acid chain; its full sequence is Large ribosomal subunit protein uL10 (172 aa).

It belongs to the universal ribosomal protein uL10 family. Part of the ribosomal stalk of the 50S ribosomal subunit. The N-terminus interacts with L11 and the large rRNA to form the base of the stalk. The C-terminus forms an elongated spine to which L12 dimers bind in a sequential fashion forming a multimeric L10(L12)X complex.

In terms of biological role, forms part of the ribosomal stalk, playing a central role in the interaction of the ribosome with GTP-bound translation factors. The protein is Large ribosomal subunit protein uL10 (rplJ) of Brucella abortus biovar 1 (strain 9-941).